We begin with the raw amino-acid sequence, 288 residues long: Acetyl-coenzyme A carboxylase carboxyl transferase subunit beta (288 aa).

One can recognise a CoA carboxyltransferase N-terminal domain in the interval 32 to 288 (LFAKCPACKH…LELHTEVENV (257 aa)). The Zn(2+) site is built by Cys36, Cys39, Cys54, and Cys57. The C4-type zinc-finger motif lies at 36-57 (CPACKHTIYQKDLGKNKVCPNC).

The protein belongs to the AccD/PCCB family. In terms of assembly, acetyl-CoA carboxylase is a heterohexamer composed of biotin carboxyl carrier protein (AccB), biotin carboxylase (AccC) and two subunits each of ACCase subunit alpha (AccA) and ACCase subunit beta (AccD). Requires Zn(2+) as cofactor.

Its subcellular location is the cytoplasm. It catalyses the reaction N(6)-carboxybiotinyl-L-lysyl-[protein] + acetyl-CoA = N(6)-biotinyl-L-lysyl-[protein] + malonyl-CoA. It participates in lipid metabolism; malonyl-CoA biosynthesis; malonyl-CoA from acetyl-CoA: step 1/1. Component of the acetyl coenzyme A carboxylase (ACC) complex. Biotin carboxylase (BC) catalyzes the carboxylation of biotin on its carrier protein (BCCP) and then the CO(2) group is transferred by the transcarboxylase to acetyl-CoA to form malonyl-CoA. The sequence is that of Acetyl-coenzyme A carboxylase carboxyl transferase subunit beta from Lactococcus lactis subsp. cremoris (strain SK11).